Consider the following 506-residue polypeptide: Histidine ammonia-lyase (506 aa).

The segment at residues 143-145 is a cross-link (5-imidazolinone (Ala-Gly)); it reads ASG. The residue at position 144 (Ser144) is a 2,3-didehydroalanine (Ser).

It belongs to the PAL/histidase family. Contains an active site 4-methylidene-imidazol-5-one (MIO), which is formed autocatalytically by cyclization and dehydration of residues Ala-Ser-Gly.

Its subcellular location is the cytoplasm. The catalysed reaction is L-histidine = trans-urocanate + NH4(+). The protein operates within amino-acid degradation; L-histidine degradation into L-glutamate; N-formimidoyl-L-glutamate from L-histidine: step 1/3. The protein is Histidine ammonia-lyase of Enterobacter sp. (strain 638).